The sequence spans 173 residues: Crossover junction endodeoxyribonuclease RuvC (173 aa).

Residues D8, E67, and D139 contribute to the active site. Mg(2+) is bound by residues D8, E67, and D139.

Belongs to the RuvC family. Homodimer which binds Holliday junction (HJ) DNA. The HJ becomes 2-fold symmetrical on binding to RuvC with unstacked arms; it has a different conformation from HJ DNA in complex with RuvA. In the full resolvosome a probable DNA-RuvA(4)-RuvB(12)-RuvC(2) complex forms which resolves the HJ. Mg(2+) is required as a cofactor.

The protein localises to the cytoplasm. The catalysed reaction is Endonucleolytic cleavage at a junction such as a reciprocal single-stranded crossover between two homologous DNA duplexes (Holliday junction).. Functionally, the RuvA-RuvB-RuvC complex processes Holliday junction (HJ) DNA during genetic recombination and DNA repair. Endonuclease that resolves HJ intermediates. Cleaves cruciform DNA by making single-stranded nicks across the HJ at symmetrical positions within the homologous arms, yielding a 5'-phosphate and a 3'-hydroxyl group; requires a central core of homology in the junction. The consensus cleavage sequence is 5'-(A/T)TT(C/G)-3'. Cleavage occurs on the 3'-side of the TT dinucleotide at the point of strand exchange. HJ branch migration catalyzed by RuvA-RuvB allows RuvC to scan DNA until it finds its consensus sequence, where it cleaves and resolves the cruciform DNA. This is Crossover junction endodeoxyribonuclease RuvC from Shewanella sediminis (strain HAW-EB3).